A 215-amino-acid polypeptide reads, in one-letter code: Large ribosomal subunit protein uL3 (215 aa).

The segment at 136 to 155 (GVSISHRSHGSTGQRQDPGK) is disordered. Position 151 is an N5-methylglutamine (Q151).

Belongs to the universal ribosomal protein uL3 family. As to quaternary structure, part of the 50S ribosomal subunit. Forms a cluster with proteins L14 and L19. Post-translationally, methylated by PrmB.

One of the primary rRNA binding proteins, it binds directly near the 3'-end of the 23S rRNA, where it nucleates assembly of the 50S subunit. The polypeptide is Large ribosomal subunit protein uL3 (Rickettsia rickettsii (strain Iowa)).